Reading from the N-terminus, the 632-residue chain is Extracellular metalloproteinase 1 (632 aa).

The signal sequence occupies residues 1 to 19 (MHGLLLAAGLLSLPLRVLA). The propeptide occupies 20–243 (HPQPSTSLTS…VHNVVDYVSH (224 aa)). Asn-284 carries N-linked (GlcNAc...) asparagine glycosylation. His-427 contacts Zn(2+). The active site involves Glu-428. A Zn(2+)-binding site is contributed by His-431. Asn-591 and Asn-620 each carry an N-linked (GlcNAc...) asparagine glycan.

The protein belongs to the peptidase M36 family. Zn(2+) serves as cofactor.

The protein resides in the secreted. Functionally, secreted metalloproteinase that allows assimilation of proteinaceous substrates and probably acts as a virulence factor. The chain is Extracellular metalloproteinase 1 (MEP1) from Arthroderma gypseum (strain ATCC MYA-4604 / CBS 118893) (Microsporum gypseum).